Here is a 444-residue protein sequence, read N- to C-terminus: Phosphoglucosamine mutase (444 aa).

Catalysis depends on S100, which acts as the Phosphoserine intermediate. Mg(2+)-binding residues include S100, D240, D242, and D244. S100 bears the Phosphoserine mark.

The protein belongs to the phosphohexose mutase family. Requires Mg(2+) as cofactor. In terms of processing, activated by phosphorylation.

The enzyme catalyses alpha-D-glucosamine 1-phosphate = D-glucosamine 6-phosphate. In terms of biological role, catalyzes the conversion of glucosamine-6-phosphate to glucosamine-1-phosphate. In Moorella thermoacetica (strain ATCC 39073 / JCM 9320), this protein is Phosphoglucosamine mutase.